The sequence spans 316 residues: 4-diphosphocytidyl-2-C-methyl-D-erythritol kinase (316 aa).

Lys11 is a catalytic residue. 99 to 109 (PVAAGLAGGST) lines the ATP pocket. Asp141 is a catalytic residue.

It belongs to the GHMP kinase family. IspE subfamily.

The enzyme catalyses 4-CDP-2-C-methyl-D-erythritol + ATP = 4-CDP-2-C-methyl-D-erythritol 2-phosphate + ADP + H(+). Its pathway is isoprenoid biosynthesis; isopentenyl diphosphate biosynthesis via DXP pathway; isopentenyl diphosphate from 1-deoxy-D-xylulose 5-phosphate: step 3/6. In terms of biological role, catalyzes the phosphorylation of the position 2 hydroxy group of 4-diphosphocytidyl-2C-methyl-D-erythritol. This is 4-diphosphocytidyl-2-C-methyl-D-erythritol kinase from Gloeothece citriformis (strain PCC 7424) (Cyanothece sp. (strain PCC 7424)).